A 520-amino-acid polypeptide reads, in one-letter code: Keratin, type II cytoskeletal 8 (520 aa).

Residues 1 to 19 show a composition bias toward low complexity; the sequence is MSTYSKKTSYTVKSSSSGS. The segment at 1–20 is disordered; sequence MSTYSKKTSYTVKSSSSGSI. Positions 2–114 are head; that stretch reads STYSKKTSYT…DPNIQIVRTQ (113 aa). S28 carries the phosphoserine modification. The interval 115-150 is coil 1A; the sequence is EKEQIKTLNNRFASFIDKVRFLEQQNKMLETKWSLL. Residues 115–426 enclose the IF rod domain; the sequence is EKEQIKTLNN…KLLEGEEDRL (312 aa). Residues 151–166 are linker 1; that stretch reads QNQTATRSNIDAMFEA. The coil 1B stretch occupies residues 168 to 259; that stretch reads IANLRRQLDS…QIFEEEIREL (92 aa). The tract at residues 260–283 is linker 12; that stretch reads QSQIKDTSVVVEMDNSRNLDMDAI. Residues 284 to 422 form a coil 2 region; sequence VAEVRAQYED…ATYRKLLEGE (139 aa). Residues 423–520 form a tail region; the sequence is EDRLATGIKA…VSESSEVVQD (98 aa).

The protein belongs to the intermediate filament family. Heterotetramer of two type I and two type II keratins. Keratin-8 associates with keratin-18. In terms of tissue distribution, expressed in simple epithelia.

The protein resides in the cytoplasm. It localises to the nucleus. The protein localises to the nucleoplasm. Its subcellular location is the nucleus matrix. In terms of biological role, together with KRT19, helps to link the contractile apparatus to dystrophin at the costameres of striated muscle. This Danio rerio (Zebrafish) protein is Keratin, type II cytoskeletal 8.